A 1192-amino-acid chain; its full sequence is Chromosome partition protein Smc (1192 aa).

An ATP-binding site is contributed by 31-38; that stretch reads PNGSGKSN. 4 coiled-coil regions span residues 164 to 197, 234 to 292, 333 to 369, and 396 to 464; these read AGIS…VDEV, LTLS…RSEL, SAIA…RDVE, and EHEA…DAKV. The SMC hinge domain maps to 522–636; sequence KDLVGIVADC…LVDTLATAIG (115 aa). 3 coiled-coil regions span residues 676–736, 772–902, and 986–1030; these read RSEL…AKLH, ELAV…EREA, and GSVN…INAD.

Belongs to the SMC family. In terms of assembly, homodimer.

The protein resides in the cytoplasm. Required for chromosome condensation and partitioning. The sequence is that of Chromosome partition protein Smc from Rhodopirellula baltica (strain DSM 10527 / NCIMB 13988 / SH1).